Here is a 94-residue protein sequence, read N- to C-terminus: Large ribosomal subunit protein bL27 (94 aa).

The propeptide occupies 1–9; that stretch reads MLRLDLQFF.

The protein belongs to the bacterial ribosomal protein bL27 family. Part of the 50S ribosomal subunit. In terms of processing, the N-terminus is cleaved by ribosomal processing cysteine protease Prp.

Plays a role in sporulation at high temperatures. In Bacillus subtilis (strain 168), this protein is Large ribosomal subunit protein bL27 (rpmA).